Reading from the N-terminus, the 785-residue chain is Endonuclease MutS2 (785 aa).

333–340 (GPNTGGKT) contacts ATP. Residues 710–785 (LDLRGQRYDE…GNGATIVQLK (76 aa)) enclose the Smr domain.

This sequence belongs to the DNA mismatch repair MutS family. MutS2 subfamily. As to quaternary structure, homodimer. Binds to stalled ribosomes, contacting rRNA.

Its function is as follows. Endonuclease that is involved in the suppression of homologous recombination and thus may have a key role in the control of bacterial genetic diversity. Functionally, acts as a ribosome collision sensor, splitting the ribosome into its 2 subunits. Detects stalled/collided 70S ribosomes which it binds and splits by an ATP-hydrolysis driven conformational change. Acts upstream of the ribosome quality control system (RQC), a ribosome-associated complex that mediates the extraction of incompletely synthesized nascent chains from stalled ribosomes and their subsequent degradation. Probably generates substrates for RQC. The sequence is that of Endonuclease MutS2 from Lactobacillus acidophilus (strain ATCC 700396 / NCK56 / N2 / NCFM).